We begin with the raw amino-acid sequence, 321 residues long: Ribose-phosphate pyrophosphokinase (321 aa).

ATP is bound by residues 44 to 46 and 103 to 104; these read DGE and RQ. Mg(2+)-binding residues include His137 and Asp179. The active site involves Lys202. D-ribose 5-phosphate contacts are provided by residues Arg204, Asp228, and 232–236; that span reads DTAGT.

The protein belongs to the ribose-phosphate pyrophosphokinase family. Class I subfamily. As to quaternary structure, homohexamer. Requires Mg(2+) as cofactor.

It localises to the cytoplasm. It carries out the reaction D-ribose 5-phosphate + ATP = 5-phospho-alpha-D-ribose 1-diphosphate + AMP + H(+). The protein operates within metabolic intermediate biosynthesis; 5-phospho-alpha-D-ribose 1-diphosphate biosynthesis; 5-phospho-alpha-D-ribose 1-diphosphate from D-ribose 5-phosphate (route I): step 1/1. In terms of biological role, involved in the biosynthesis of the central metabolite phospho-alpha-D-ribosyl-1-pyrophosphate (PRPP) via the transfer of pyrophosphoryl group from ATP to 1-hydroxyl of ribose-5-phosphate (Rib-5-P). This is Ribose-phosphate pyrophosphokinase from Staphylococcus epidermidis (strain ATCC 35984 / DSM 28319 / BCRC 17069 / CCUG 31568 / BM 3577 / RP62A).